We begin with the raw amino-acid sequence, 417 residues long: Serine hydroxymethyltransferase (417 aa).

Residues L121 and 125 to 127 (GHL) each bind (6S)-5,6,7,8-tetrahydrofolate. Residue K229 is modified to N6-(pyridoxal phosphate)lysine. 355-357 (SPF) contacts (6S)-5,6,7,8-tetrahydrofolate.

It belongs to the SHMT family. Homodimer. The cofactor is pyridoxal 5'-phosphate.

The protein resides in the cytoplasm. It catalyses the reaction (6R)-5,10-methylene-5,6,7,8-tetrahydrofolate + glycine + H2O = (6S)-5,6,7,8-tetrahydrofolate + L-serine. It functions in the pathway one-carbon metabolism; tetrahydrofolate interconversion. The protein operates within amino-acid biosynthesis; glycine biosynthesis; glycine from L-serine: step 1/1. Its function is as follows. Catalyzes the reversible interconversion of serine and glycine with tetrahydrofolate (THF) serving as the one-carbon carrier. This reaction serves as the major source of one-carbon groups required for the biosynthesis of purines, thymidylate, methionine, and other important biomolecules. Also exhibits THF-independent aldolase activity toward beta-hydroxyamino acids, producing glycine and aldehydes, via a retro-aldol mechanism. This chain is Serine hydroxymethyltransferase, found in Xanthomonas campestris pv. campestris (strain 8004).